Reading from the N-terminus, the 359-residue chain is SAGA complex subunit Spt7 (359 aa).

Component of the Spt-Ada-Gcn5 acetyltransferase (SAGA) complex consisting of wda/Taf5L, Saf6, Taf9, Taf10b, Taf12, Ada1, Spt3, Spt7, Spt20, Sf3b3, Sf3b5, Nipped-A/Tra1, a histone acetyltransferase (HAT) module made up of Gcn5, Ada2b (Isoform B), Ada3 and Sgf29, and a deubiquitinase (DUB) module made up of not/nonstop, Sgf11 and e(y)2 tethered to SAGA by Atxn7. Interacts with Ada2b; the interaction is direct.

It localises to the nucleus. Its function is as follows. Component of the transcription regulatory complex SAGA, a multiprotein complex that activates transcription by remodeling chromatin and mediating histone acetylation and deubiquitination. The SAGA complex predominantly acetylates histone H3. The sequence is that of SAGA complex subunit Spt7 from Drosophila melanogaster (Fruit fly).